A 575-amino-acid chain; its full sequence is MTYRPLLNDLVDMAAGRAPVDLVVRNARIVDVFSQRIVEAPLAIGGGRFLGFFEAEAHATLDAEGRYLLPGLIDGHVHIESSLVSPAQFARLVLARGTTAVIADPHEIANVCGLAGLRYMLDATRDLPLDVRLALPSCVPATPFENAGAVLDAAALATLMDDPRVAGLGEMMNFPGVLAGDADVLDKIALALDRGKTVDGHSPGLAGRDLATYAAARIATDHECTTVDEMHERIALGMYVLLREGSAARDMARLAPGITPGNARRCVFCTDDRQPADILRDGHIDNHLRIAVSHGVDPVTAVTIATLNAAECFGLRDRGAVAPGRVADFVLVDDLTGFAVRKVYAAGRLVARDGAVVVDLPDHADPAVRDTVNIRPLDDTAFRLPLPTGLARVIGLQPHSLLTDALERDVPRDASGCFTPGDGLVKLAVVERHKATGNVGVGIIEGYGLRGGAVATTVAHDSHNIVVAGDNDADMLVAVRELERTGGGITLCAGGRVLASLPLPVAGLMSDRPATEVSATFAQMLSIAHETLHISRDIEPFMTLSFLTLPVIPALKLTDRGLFDVRTFSFTTVGV.

This sequence belongs to the metallo-dependent hydrolases superfamily. Adenine deaminase family. Mn(2+) serves as cofactor.

It carries out the reaction adenine + H2O + H(+) = hypoxanthine + NH4(+). This Nitratidesulfovibrio vulgaris (strain ATCC 29579 / DSM 644 / CCUG 34227 / NCIMB 8303 / VKM B-1760 / Hildenborough) (Desulfovibrio vulgaris) protein is Adenine deaminase.